The following is a 276-amino-acid chain: uncharacterized protein (276 aa).

An N-terminal signal peptide occupies residues 1–29; sequence MKSHVRSFKTYIRDEIIKKGGWVNAHAHA.

The protein belongs to the metallo-dependent hydrolases superfamily.

This is an uncharacterized protein from Haemophilus influenzae (strain ATCC 51907 / DSM 11121 / KW20 / Rd).